The primary structure comprises 352 residues: N-lysine methyltransferase KMT5A (352 aa).

Residues 21–51 (AVAATAPGPEMVERRGPGRPRTNGENVFTGQ) are disordered. Ser59 bears the Phosphoserine mark. Residues 87–202 (PLAGIYRKRD…KSKAELQSEE (116 aa)) form a disordered region. The segment covering 109 to 121 (MKAEEQKIKDARR) has biased composition (basic and acidic residues). Thr140 carries the phosphothreonine modification. A compositionally biased stretch (basic residues) spans 156-172 (GLKKPVRGKQAPRKKAQ). The region spanning 216–337 (EGMKIDLIDG…AGEELLYDYG (122 aa)) is the SET domain. Residues 226 to 228 (KGR), Tyr271, and 298 to 299 (NH) each bind S-adenosyl-L-methionine.

Belongs to the class V-like SAM-binding methyltransferase superfamily. Histone-lysine methyltransferase family. PR/SET subfamily. In terms of assembly, interacts with L3MBTL1. Interacts with SIRT2 (phosphorylated form); the interaction is direct, stimulates KMT5A-mediated methyltransferase activity at histone H4 'Lys-20' (H4K20me1) and is increased in a H(2)O(2)-induced oxidative stress-dependent manner. In terms of processing, ubiquitinated and degraded by the DCX(DTL) complex.

It localises to the nucleus. The protein resides in the chromosome. The enzyme catalyses L-lysyl(20)-[histone H4] + S-adenosyl-L-methionine = N(6)-methyl-L-lysyl(20)-[histone H4] + S-adenosyl-L-homocysteine + H(+). The catalysed reaction is L-lysyl-[protein] + S-adenosyl-L-methionine = N(6)-methyl-L-lysyl-[protein] + S-adenosyl-L-homocysteine + H(+). In terms of biological role, protein-lysine N-methyltransferase that monomethylates both histones and non-histone proteins. Specifically monomethylates 'Lys-20' of histone H4 (H4K20me1). H4K20me1 is enriched during mitosis and represents a specific tag for epigenetic transcriptional repression. Mainly functions in euchromatin regions, thereby playing a central role in the silencing of euchromatic genes. Required for cell proliferation, probably by contributing to the maintenance of proper higher-order structure of DNA during mitosis. Involved in chromosome condensation and proper cytokinesis. Nucleosomes are preferred as substrate compared to free histones. Mediates monomethylation of p53/TP53 at 'Lys-382', leading to repress p53/TP53-target genes. Plays a negative role in TGF-beta response regulation and a positive role in cell migration. The protein is N-lysine methyltransferase KMT5A of Bos taurus (Bovine).